The chain runs to 173 residues: Translationally-controlled tumor protein homolog (173 aa).

Positions 1 to 173 (MKVYRDLYSN…LKDGLVEERY (173 aa)) constitute a TCTP domain.

The protein belongs to the TCTP family.

It is found in the cytoplasm. Involved in calcium binding and microtubule stabilization. This chain is Translationally-controlled tumor protein homolog (TCTP), found in Theileria annulata.